Here is a 173-residue protein sequence, read N- to C-terminus: Translation initiation factor IF-3 (173 aa).

It belongs to the IF-3 family. As to quaternary structure, monomer.

The protein localises to the cytoplasm. In terms of biological role, IF-3 binds to the 30S ribosomal subunit and shifts the equilibrium between 70S ribosomes and their 50S and 30S subunits in favor of the free subunits, thus enhancing the availability of 30S subunits on which protein synthesis initiation begins. The polypeptide is Translation initiation factor IF-3 (Phenylobacterium zucineum (strain HLK1)).